A 548-amino-acid polypeptide reads, in one-letter code: Non-structural protein NS1 (548 aa).

Belongs to the orbivirus non-structural protein NS1 family.

The chain is Non-structural protein NS1 (Segment-5) from African horse sickness virus (AHSV).